The following is a 182-amino-acid chain: Adenine phosphoribosyltransferase (182 aa).

This sequence belongs to the purine/pyrimidine phosphoribosyltransferase family. In terms of assembly, homodimer.

The protein localises to the cytoplasm. The catalysed reaction is AMP + diphosphate = 5-phospho-alpha-D-ribose 1-diphosphate + adenine. It functions in the pathway purine metabolism; AMP biosynthesis via salvage pathway; AMP from adenine: step 1/1. Its function is as follows. Catalyzes a salvage reaction resulting in the formation of AMP, that is energically less costly than de novo synthesis. This chain is Adenine phosphoribosyltransferase, found in Pseudomonas syringae pv. syringae (strain B728a).